The following is a 414-amino-acid chain: 2-epi-5-epi-valiolone synthase (414 aa).

NAD(+) is bound by residues Asp-70, 101-104, 134-138, 158-159, Lys-171, Lys-180, and 198-201; these read ESAK, GVLTD, TT, and FLAT. Lys-171 is an active-site residue. Zn(2+) contacts are provided by Glu-213, His-284, and His-300.

The protein belongs to the sugar phosphate cyclases superfamily. EEVS family. NAD(+) is required as a cofactor. It depends on Zn(2+) as a cofactor.

The catalysed reaction is D-sedoheptulose 7-phosphate = 2-epi-5-epi-valiolone + phosphate. The protein operates within antibiotic biosynthesis. Its function is as follows. Catalyzes the cyclization of D-sedoheptulose 7-phosphate to 2-epi-5-epi-valiolone. Involved in validamycin biosynthesis. The chain is 2-epi-5-epi-valiolone synthase from Streptomyces hygroscopicus subsp. jinggangensis (strain 5008).